Here is a 369-residue protein sequence, read N- to C-terminus: Guanine nucleotide-binding protein subunit beta-2 (369 aa).

The span at 1–24 shows a compositional bias: polar residues; it reads MSTIAGESSSSSKMPENSQPTTTE. The segment at 1-28 is disordered; the sequence is MSTIAGESSSSSKMPENSQPTTTEKGSE. 7 WD repeats span residues 79-109, 121-151, 167-197, 209-241, 253-283, 297-327, and 339-369; these read GHVGKVLCMDWSLDKRHIVSSSQDGKVIVWD, MPTTWVMACAFSPSSQMIACGGLDNKCSVVP, THTSYMSCCTFLRSDNLILTGSGDSTCAIWD, GHTGDVFAIDVPKCDTGNTFISAGADKHSLVWD, GHEADINTVRFHPNGDAFATGSDDATCRLFD, SILFPVNGVDFSLSGRILFAGYGDYRVGVWD, and GHENRISCLRTSPDGTAVCSASWDCTIRIWA.

It belongs to the WD repeat G protein beta family. As to quaternary structure, g proteins are composed of 3 units, alpha, beta and gamma. Interacts with G protein gamma subunits gpc-1 and gpc-2 and with egl-10 and eat-16.

In terms of biological role, guanine nucleotide-binding proteins (G proteins) are involved as a modulator or transducer in various transmembrane signaling systems. The beta and gamma chains are required for the GTPase activity, for replacement of GDP by GTP, and for G protein-effector interaction. Plays a role in regulating dopamine-mediated locomotion behavior. The sequence is that of Guanine nucleotide-binding protein subunit beta-2 from Caenorhabditis elegans.